The chain runs to 184 residues: Effector CFEM1 (184 aa).

The first 17 residues, 1–17 (MKYSVAFVALAAVAAQA), serve as a signal peptide directing secretion. Residues 18 to 112 (QSLADVPKCA…PTTTAAATST (95 aa)) form the CFEM domain. Disulfide bonds link C26-C68, C30-C63, C41-C48, and C50-C85. D45 lines the heme pocket. Disordered stretches follow at residues 83–106 (NLCK…PTTT) and 136–163 (IIPT…EQAN). Residues 88-103 (PPKESEAKSTAEEEKP) are compositionally biased toward basic and acidic residues. N163 is lipidated: GPI-anchor amidated asparagine. Residues 164–184 (GAAGLKGLGALAMAAFAALAL) constitute a propeptide, removed in mature form.

It belongs to the RBT5 family. Interacts with Z.mays LRR5; the interaction is direct. Interacts (via CFEM domain) with Z.mays WAK17 isoform 2; the interaction is direct.

It is found in the secreted. It localises to the cell wall. Its subcellular location is the cell membrane. The protein localises to the cell septum. The protein resides in the cytoplasm. Its function is as follows. Suppresses host programmed cell death during infection by binding to Z.mays WAK17 isoform 2 and Z.mays LRR5, to prevent activation of Z.mays WAK17 isoform 1 and the downstream hypersensitive response. This chain is Effector CFEM1, found in Gibberella zeae (strain ATCC MYA-4620 / CBS 123657 / FGSC 9075 / NRRL 31084 / PH-1) (Wheat head blight fungus).